Consider the following 82-residue polypeptide: Omega-ctenitoxin-Pn1a (82 aa).

The signal sequence occupies residues M1–A21. A propeptide spanning residues E22–R37 is cleaved from the precursor. 4 disulfides stabilise this stretch: C39/C54, C46/C59, C53/C70, and C61/C68. Residues K72–K82 constitute a propeptide that is removed on maturation.

Belongs to the neurotoxin 02 (plectoxin) family. As to expression, expressed by the venom gland.

The protein localises to the secreted. Antagonist of L-type calcium channels (Cav1/CACNA1). Induces immediate clockwise gyration and flaccid paralysis after 6 hours at dose levels of 5 ug per mouse. The polypeptide is Omega-ctenitoxin-Pn1a (Phoneutria nigriventer (Brazilian armed spider)).